Consider the following 806-residue polypeptide: Disintegrin and metalloproteinase domain-containing protein 1b (806 aa).

The N-terminal stretch at Met1–Cys33 is a signal peptide. Positions Cys169–Lys188 are disordered. Positions Lys203–Pro397 constitute a Peptidase M12B domain. Residue Asn224 is glycosylated (N-linked (GlcNAc...) asparagine). Intrachain disulfides connect Cys313–Cys392, Cys353–Cys376, Cys355–Cys361, Cys462–Cys482, Cys635–Cys647, Cys641–Cys653, and Cys655–Cys664. A Zn(2+)-binding site is contributed by His338. Glu339 is an active-site residue. Zn(2+)-binding residues include His342 and His348. N-linked (GlcNAc...) asparagine glycans are attached at residues Asn375 and Asn476. A Disintegrin domain is found at Ala406 to Asp490. Residues Phe631–Lys665 enclose the EGF-like domain. The interval Gly668–Ser694 is disordered. Residues Asn680, Asn683, and Asn690 are each glycosylated (N-linked (GlcNAc...) asparagine). A compositionally biased stretch (polar residues) spans Asn680–Ser694. Residues Leu705–Ser725 traverse the membrane as a helical segment. Residues Ala726–Glu806 are Cytoplasmic-facing. The tract at residues Glu735–Glu806 is disordered. The segment covering Glu740 to Glu806 has biased composition (acidic residues).

In terms of assembly, heterodimer with ADAM2/fertilin subunit beta. As to expression, testis.

The protein localises to the membrane. May play a role in spermatogenesis and sperm maturation. This chain is Disintegrin and metalloproteinase domain-containing protein 1b (Adam1b), found in Mus musculus (Mouse).